The primary structure comprises 158 residues: Small ribosomal subunit protein uS17 (158 aa).

Position 2 is an N-acetylalanine (alanine 2). Arginine 22 bears the Citrulline mark. 3 positions are modified to N6-acetyllysine: lysine 38, lysine 45, and lysine 58. Cysteine 60 is lipidated: S-palmitoyl cysteine. Residue serine 67 is modified to Phosphoserine. Omega-N-methylarginine is present on arginine 69. Serine 110 carries the phosphoserine modification.

Belongs to the universal ribosomal protein uS17 family. Component of the small ribosomal subunit. Part of the small subunit (SSU) processome, composed of more than 70 proteins and the RNA chaperone small nucleolar RNA (snoRNA) U3. In terms of processing, citrullinated by PADI4.

Its subcellular location is the cytoplasm. The protein localises to the nucleus. The protein resides in the nucleolus. Its function is as follows. Component of the small ribosomal subunit. The ribosome is a large ribonucleoprotein complex responsible for the synthesis of proteins in the cell. Part of the small subunit (SSU) processome, first precursor of the small eukaryotic ribosomal subunit. During the assembly of the SSU processome in the nucleolus, many ribosome biogenesis factors, an RNA chaperone and ribosomal proteins associate with the nascent pre-rRNA and work in concert to generate RNA folding, modifications, rearrangements and cleavage as well as targeted degradation of pre-ribosomal RNA by the RNA exosome. The polypeptide is Small ribosomal subunit protein uS17 (RPS11) (Canis lupus familiaris (Dog)).